Reading from the N-terminus, the 145-residue chain is METIFDYNQIKEIIPHRQPFLLIDRVVEYEVGTRCVAIKQVSGNEPFFQGHFPEYAVMPGVLITEALAQTGAVAILNSEENKGKLAFFAGIDKCRFKKQVTPGDTLKLEVEITKMRGPIGKGNAKATVDGEVACSCELTFAIQAK.

The active site involves His-51.

Belongs to the thioester dehydratase family. FabZ subfamily.

It localises to the cytoplasm. The enzyme catalyses a (3R)-hydroxyacyl-[ACP] = a (2E)-enoyl-[ACP] + H2O. Involved in unsaturated fatty acids biosynthesis. Catalyzes the dehydration of short chain beta-hydroxyacyl-ACPs and long chain saturated and unsaturated beta-hydroxyacyl-ACPs. In Staphylococcus saprophyticus subsp. saprophyticus (strain ATCC 15305 / DSM 20229 / NCIMB 8711 / NCTC 7292 / S-41), this protein is 3-hydroxyacyl-[acyl-carrier-protein] dehydratase FabZ.